The sequence spans 259 residues: 5'-nucleotidase SurE (259 aa).

4 residues coordinate a divalent metal cation: Asp8, Asp9, Ser40, and Asn92.

Belongs to the SurE nucleotidase family. A divalent metal cation is required as a cofactor.

It is found in the cytoplasm. It catalyses the reaction a ribonucleoside 5'-phosphate + H2O = a ribonucleoside + phosphate. In terms of biological role, nucleotidase that shows phosphatase activity on nucleoside 5'-monophosphates. The protein is 5'-nucleotidase SurE of Xanthomonas campestris pv. campestris (strain 8004).